The chain runs to 617 residues: DNA double-strand break repair protein Mre11 (617 aa).

Mn(2+) contacts are provided by Asp12, His14, Asp53, and Asn88. His89 (proton donor) is an active-site residue. Mn(2+)-binding residues include His158, Asp189, and His191. Positions 395 to 432 (SPVDPSSSVSSIESSGSVSPIDSVSTVSPSSPSSSAII) are enriched in low complexity. Disordered regions lie at residues 395-437 (SPVD…EPEE) and 513-617 (VEDE…GDYL). A compositionally biased stretch (polar residues) spans 529 to 547 (APQSSSPVSFSDNSQTGFS). The span at 549–559 (ISPPESIPSPE) shows a compositional bias: low complexity. Positions 560-583 (ILKENSEADADEKPVDGKLSEEKP) are enriched in basic and acidic residues.

The protein belongs to the MRE11/RAD32 family. Homodimer. Forms a heterotetramer composed of two Mre11 subunits and two Rad50 subunits. Mn(2+) is required as a cofactor.

With respect to regulation, nuclease activity is regulated by Rad50. In terms of biological role, part of the Rad50/Mre11 complex, which is involved in the early steps of DNA double-strand break (DSB) repair. The complex may facilitate opening of the processed DNA ends to aid in the recruitment of HerA and NurA. Mre11 binds to DSB ends and has both double-stranded 3'-5' exonuclease activity and single-stranded endonuclease activity. The chain is DNA double-strand break repair protein Mre11 from Methanosarcina mazei (strain ATCC BAA-159 / DSM 3647 / Goe1 / Go1 / JCM 11833 / OCM 88) (Methanosarcina frisia).